The sequence spans 607 residues: Elongation factor 4 (607 aa).

A tr-type G domain is found at 11 to 193 (GKIRNFSIIA…QIVEKVPAPT (183 aa)). GTP is bound by residues 23-28 (DHGKST) and 140-143 (NKID).

This sequence belongs to the TRAFAC class translation factor GTPase superfamily. Classic translation factor GTPase family. LepA subfamily.

The protein resides in the cell membrane. It carries out the reaction GTP + H2O = GDP + phosphate + H(+). Required for accurate and efficient protein synthesis under certain stress conditions. May act as a fidelity factor of the translation reaction, by catalyzing a one-codon backward translocation of tRNAs on improperly translocated ribosomes. Back-translocation proceeds from a post-translocation (POST) complex to a pre-translocation (PRE) complex, thus giving elongation factor G a second chance to translocate the tRNAs correctly. Binds to ribosomes in a GTP-dependent manner. This is Elongation factor 4 from Streptococcus pneumoniae (strain Taiwan19F-14).